Reading from the N-terminus, the 383-residue chain is Vesicle-associated membrane protein-associated protein scs2 (383 aa).

The MSP domain maps to 1–123 (MSVECSGELF…SIFDRKIRCV (123 aa)). Topologically, residues 1 to 362 (MSVECSGELF…TGASLTESPG (362 aa)) are cytoplasmic. Residues 127-146 (KQPPQSADKQVENTSTSNPP) show a composition bias toward polar residues. Disordered regions lie at residues 127 to 160 (KQPP…SSVG) and 233 to 359 (ESAS…SLTE). Ser236, Ser237, Ser259, Ser261, and Ser268 each carry phosphoserine. The segment covering 241 to 263 (DVARSKVQDIIDNEIPKPSESPR) has biased composition (basic and acidic residues). Residues 289-300 (FDTKKNDFDSKL) show a composition bias toward basic and acidic residues. The segment covering 347–359 (ADPSSSTGASLTE) has biased composition (polar residues). Residues 363 to 383 (IPPNIVIILCLIFFLIGYLFF) form a helical; Anchor for type IV membrane protein membrane-spanning segment.

This sequence belongs to the VAMP-associated protein (VAP) (TC 9.B.17) family. As to quaternary structure, interacts (via MSP domain) with duc1 (via FFAT-motif); the interaction is direct and serves to restrict the localization of duc1 to areas of cell membrane-endoplasmic reticulum contact sites, and away from the cell division site. Interacts with epr1.

It localises to the endoplasmic reticulum membrane. Its function is as follows. Vesicle-associated membrane protein-associated protein (VAP) implicated in maintaining the cortical endoplasmic reticulum (ER)-plasma membrane (PM) attachment. ER-PM contacts function to modulate the distribution of contractile ring components to ensure robust ring assembly. ER-PM contacts function also in controlling exocytosis and maintenance of cell polarity regulating cell shape. VAPs play an important role in regulating eisosome assembly. VAPs also contribute to ER-phagy by tethering atg8 to the ER membrane, but also by maintaining the ER-plasma membrane contact. Restricts the localization of duc1 away from the site of cell division. This is Vesicle-associated membrane protein-associated protein scs2 (scs2) from Schizosaccharomyces pombe (strain 972 / ATCC 24843) (Fission yeast).